A 337-amino-acid chain; its full sequence is Putative 4-hydroxythreonine-4-phosphate dehydrogenase 2 (337 aa).

A divalent metal cation is bound by residues His173, His217, and His274.

This sequence belongs to the PdxA family. As to quaternary structure, homodimer. Zn(2+) serves as cofactor. Mg(2+) is required as a cofactor. The cofactor is Co(2+).

It is found in the cytoplasm. The enzyme catalyses 4-(phosphooxy)-L-threonine + NAD(+) = 3-amino-2-oxopropyl phosphate + CO2 + NADH. It participates in cofactor biosynthesis; pyridoxine 5'-phosphate biosynthesis; pyridoxine 5'-phosphate from D-erythrose 4-phosphate: step 4/5. Catalyzes the NAD(P)-dependent oxidation of 4-(phosphooxy)-L-threonine (HTP) into 2-amino-3-oxo-4-(phosphooxy)butyric acid which spontaneously decarboxylates to form 3-amino-2-oxopropyl phosphate (AHAP). This chain is Putative 4-hydroxythreonine-4-phosphate dehydrogenase 2, found in Pseudomonas aeruginosa (strain ATCC 15692 / DSM 22644 / CIP 104116 / JCM 14847 / LMG 12228 / 1C / PRS 101 / PAO1).